A 70-amino-acid chain; its full sequence is Adenylate kinase (70 aa).

Residue 10-15 participates in ATP binding; that stretch reads GAGKGT. The interval 30–59 is NMP; the sequence is STGDLFRANISKQTELGKLAKSYMDKGELV. AMP is bound by residues Thr31, Arg36, and 57-59; that span reads ELV.

This sequence belongs to the adenylate kinase family. As to quaternary structure, monomer.

It is found in the cytoplasm. The catalysed reaction is AMP + ATP = 2 ADP. It participates in purine metabolism; AMP biosynthesis via salvage pathway; AMP from ADP: step 1/1. Functionally, catalyzes the reversible transfer of the terminal phosphate group between ATP and AMP. Plays an important role in cellular energy homeostasis and in adenine nucleotide metabolism. In Streptomyces scabiei, this protein is Adenylate kinase (adk).